A 475-amino-acid chain; its full sequence is MTATAEKTAGRVVRITGPVVDVEFPRGSVPELFNALHAEISYKDLSKTLTLEVAQHLGDNLVRTISMQPTDGLVRGVEVTDTGTSISVPVGDGVKGHVFNALGDCLDEPGYGKDFEHWSIHRKPPAFADLEPRTEMLETGLKVVDLLTPYVRGGKIALFGGAGVGKTVLIQEMINRIARNFGGTSVFAGVGERTREGNDLWVELADANVLKDTALVFGQMDEPPGTRMRVALSALTMAEFFRDEQGQDVLLFIDNIFRFTQAGSEVSTLLGRMPSAVGYQPTLADEMGELQERITSTRGKSITSMQAVYVPADDYTDPAPATTFAHLDATTELSRAVFSKGIFPAVDPLASSSTILDPAVVGDEHYRVAQEVIRILQRYKDLQDIIAILGIDELAEEDKQLVQRARRIERFLSQNMMAAEQFTGQPGSTVPLKETIEAFDKLTKGDFDHLPEQAFFLIGGLDDLAKKAESLGAKL.

160-167 (GGAGVGKT) contacts ATP.

Belongs to the ATPase alpha/beta chains family. F-type ATPases have 2 components, CF(1) - the catalytic core - and CF(0) - the membrane proton channel. CF(1) has five subunits: alpha(3), beta(3), gamma(1), delta(1), epsilon(1). CF(0) has three main subunits: a(1), b(2) and c(9-12). The alpha and beta chains form an alternating ring which encloses part of the gamma chain. CF(1) is attached to CF(0) by a central stalk formed by the gamma and epsilon chains, while a peripheral stalk is formed by the delta and b chains.

Its subcellular location is the cell membrane. It carries out the reaction ATP + H2O + 4 H(+)(in) = ADP + phosphate + 5 H(+)(out). Functionally, produces ATP from ADP in the presence of a proton gradient across the membrane. The catalytic sites are hosted primarily by the beta subunits. The chain is ATP synthase subunit beta from Mycolicibacterium vanbaalenii (strain DSM 7251 / JCM 13017 / BCRC 16820 / KCTC 9966 / NRRL B-24157 / PYR-1) (Mycobacterium vanbaalenii).